We begin with the raw amino-acid sequence, 827 residues long: Beta-galactosidase 2 (827 aa).

The signal sequence occupies residues Met1 to Ala24. The active-site Proton donor is Glu182. Asn209 carries an N-linked (GlcNAc...) asparagine glycan. Glu251 (nucleophile) is an active-site residue. A glycan (N-linked (GlcNAc...) asparagine) is linked at Asn458. Residues Asp741–Gly827 form the SUEL-type lectin domain.

The protein belongs to the glycosyl hydrolase 35 family.

The protein localises to the secreted. Its subcellular location is the extracellular space. It is found in the apoplast. It catalyses the reaction Hydrolysis of terminal non-reducing beta-D-galactose residues in beta-D-galactosides.. The sequence is that of Beta-galactosidase 2 from Oryza sativa subsp. japonica (Rice).